Here is a 146-residue protein sequence, read N- to C-terminus: VDLTAEEKAAVLALWGKVNEDEVGGEALGRLLVVYPWTQRFFDSFGDLSTPAAVLGNAKVKAHGKKVLHSFGDGVHNLDNLKGTYAALSELHCDKLHVDPENFRLLGNVLVVVLAQHFGQEFTPELQAAYQKVVAGVANALAHKYH.

The residue at position 1 (valine 1) is an N-acetylvaline. Positions 2–146 (DLTAEEKAAV…VANALAHKYH (145 aa)) constitute a Globin domain. Serine 44 is subject to Phosphoserine. Residue lysine 59 is modified to N6-acetyllysine. Histidine 63 contacts heme b. Position 82 is an N6-acetyllysine (lysine 82). Histidine 92 is a binding site for heme b. Position 93 is an S-nitrosocysteine (cysteine 93). Lysine 144 is subject to N6-acetyllysine.

This sequence belongs to the globin family. Heterotetramer of two alpha chains and two beta chains. In terms of tissue distribution, red blood cells.

Functionally, involved in oxygen transport from the lung to the various peripheral tissues. The sequence is that of Hemoglobin subunit beta (HBB) from Rhinoceros unicornis (Greater Indian rhinoceros).